A 130-amino-acid polypeptide reads, in one-letter code: Small ribosomal subunit protein uS9 (130 aa).

The segment at 105-130 (TRDSRMKERKKPGLKGARRAPQFSKR) is disordered. Residues 111–130 (KERKKPGLKGARRAPQFSKR) show a composition bias toward basic residues.

Belongs to the universal ribosomal protein uS9 family.

The chain is Small ribosomal subunit protein uS9 from Listeria welshimeri serovar 6b (strain ATCC 35897 / DSM 20650 / CCUG 15529 / CIP 8149 / NCTC 11857 / SLCC 5334 / V8).